The following is a 948-amino-acid chain: Non-lysosomal glucosylceramidase (948 aa).

The Extracellular portion of the chain corresponds to 1–736 (MAEPLAVETK…VMDGPSAYCS (736 aa)). The segment covering 177-195 (STRDKTSDPDGDPDGERTK) has biased composition (basic and acidic residues). The segment at 177–197 (STRDKTSDPDGDPDGERTKCQ) is disordered. The N-linked (GlcNAc...) asparagine glycan is linked to N200. S214 bears the Phosphoserine mark. N-linked (GlcNAc...) asparagine glycosylation is found at N288, N555, and N629. Phosphoserine occurs at positions 667 and 669. N673 carries an N-linked (GlcNAc...) asparagine glycan. Residues 737 to 753 (GLWLAALQAMSAMATIL) form a helical membrane-spanning segment. Topologically, residues 754–948 (DQPNDCLRYQ…ALERRRAQRD (195 aa)) are cytoplasmic.

It belongs to the non-lysosomal glucosylceramidase family.

The protein resides in the cell membrane. The catalysed reaction is a beta-D-glucosyl-(1&lt;-&gt;1')-N-acylsphing-4-enine + H2O = an N-acylsphing-4-enine + D-glucose. Its function is as follows. Non-lysosomal glucosylceramidase that catalyzes the conversion of glucosylceramide to free glucose and ceramide. The polypeptide is Non-lysosomal glucosylceramidase (Drosophila melanogaster (Fruit fly)).